The primary structure comprises 122 residues: Large ribosomal subunit protein uL22 (122 aa).

Belongs to the universal ribosomal protein uL22 family. Part of the 50S ribosomal subunit.

Its function is as follows. This protein binds specifically to 23S rRNA; its binding is stimulated by other ribosomal proteins, e.g. L4, L17, and L20. It is important during the early stages of 50S assembly. It makes multiple contacts with different domains of the 23S rRNA in the assembled 50S subunit and ribosome. The globular domain of the protein is located near the polypeptide exit tunnel on the outside of the subunit, while an extended beta-hairpin is found that lines the wall of the exit tunnel in the center of the 70S ribosome. In Thermosynechococcus vestitus (strain NIES-2133 / IAM M-273 / BP-1), this protein is Large ribosomal subunit protein uL22.